Here is a 201-residue protein sequence, read N- to C-terminus: Lipoprotein signal peptidase (201 aa).

The next 2 membrane-spanning stretches (helical) occupy residues Ser-73–Ile-93 and Thr-97–Asp-117. Active-site residues include Asp-126 and Asp-144. Residues Tyr-135–Ile-155 form a helical membrane-spanning segment.

Belongs to the peptidase A8 family.

It is found in the cell inner membrane. It catalyses the reaction Release of signal peptides from bacterial membrane prolipoproteins. Hydrolyzes -Xaa-Yaa-Zaa-|-(S,diacylglyceryl)Cys-, in which Xaa is hydrophobic (preferably Leu), and Yaa (Ala or Ser) and Zaa (Gly or Ala) have small, neutral side chains.. The protein operates within protein modification; lipoprotein biosynthesis (signal peptide cleavage). Its function is as follows. This protein specifically catalyzes the removal of signal peptides from prolipoproteins. This is Lipoprotein signal peptidase from Rickettsia africae (strain ESF-5).